We begin with the raw amino-acid sequence, 383 residues long: Heme A synthase (383 aa).

Helical transmembrane passes span 38 to 58 (VRVWLMMLFGLVVIMIAVGGL), 127 to 147 (VIGLVWALGFFGFLVTRKIPP), 153 to 173 (LFLLGVLGGLQGAIGWWMVAS), 187 to 207 (LATHLGLAFFILGLIAWYIMV), 230 to 250 (ANWLMGLAAVQILLGALVAGI), 287 to 307 (LVQFNHRMVGYLLLLVGLYVW), 321 to 341 (AFDWVAVILFGQMVLGIVTVL), and 344 to 364 (APWTWAIAHQFGAVVTICLIL). Residue His-292 participates in heme binding. His-352 contacts heme.

This sequence belongs to the COX15/CtaA family. Type 2 subfamily. Interacts with CtaB. It depends on heme b as a cofactor.

It is found in the cell membrane. It carries out the reaction Fe(II)-heme o + 2 A + H2O = Fe(II)-heme a + 2 AH2. It participates in porphyrin-containing compound metabolism; heme A biosynthesis; heme A from heme O: step 1/1. In terms of biological role, catalyzes the conversion of heme O to heme A by two successive hydroxylations of the methyl group at C8. The first hydroxylation forms heme I, the second hydroxylation results in an unstable dihydroxymethyl group, which spontaneously dehydrates, resulting in the formyl group of heme A. The polypeptide is Heme A synthase (Dinoroseobacter shibae (strain DSM 16493 / NCIMB 14021 / DFL 12)).